A 317-amino-acid chain; its full sequence is Ornithine carbamoyltransferase (317 aa).

Carbamoyl phosphate is bound by residues 57 to 60 (STRT), Q84, R108, and 135 to 138 (HPCQ). L-ornithine-binding positions include N166, D230, and 234-235 (SM). Carbamoyl phosphate contacts are provided by residues 270–271 (CL) and R298.

Belongs to the aspartate/ornithine carbamoyltransferase superfamily. OTCase family. As to quaternary structure, homododecamer.

It localises to the cytoplasm. It catalyses the reaction carbamoyl phosphate + L-ornithine = L-citrulline + phosphate + H(+). It functions in the pathway amino-acid biosynthesis; L-arginine biosynthesis; L-arginine from L-ornithine and carbamoyl phosphate: step 1/3. In terms of biological role, reversibly catalyzes the transfer of the carbamoyl group from carbamoyl phosphate (CP) to the N(epsilon) atom of ornithine (ORN) to produce L-citrulline. The chain is Ornithine carbamoyltransferase from Pyrococcus abyssi (strain GE5 / Orsay).